The primary structure comprises 471 residues: Nuclear receptor subfamily 0 group B member 1 (471 aa).

3 repeat units span residues 1 to 67, 68 to 134, and 135 to 201. The tract at residues 1-253 is 4 X 67 AA tandem repeats; that stretch reads MAGEDHQWQG…QRVALKSPQV (253 aa). 3 short sequence motifs (LXXLL motif) span residues 13–17, 80–84, and 147–151; these read LYNML and LYSLL. A 4; truncated repeat occupies 202-253; sequence FCGEDHPRQSGILCNMPMSAKQTHVAPEAQPGAPWWDPSCAAQRVALKSPQV. In terms of domain architecture, NR LBD spans 210–470; that stretch reads QSGILCNMPM…DMMLEMLCAK (261 aa). The AF-2 motif signature appears at 462-467; it reads MMLEML.

This sequence belongs to the nuclear hormone receptor family. NR0 subfamily. As to quaternary structure, homodimer. Interacts with NR5A1, NR5A2, NR0B2 and with COPS2. Interacts with ESRRB; represses ESRRB activity at the GATA6 promoter.

Its subcellular location is the nucleus. It is found in the cytoplasm. Functionally, nuclear receptor that lacks a DNA-binding domain and acts as a corepressor that inhibits the transcriptional activity of other nuclear receptors through heterodimeric interactions. Component of a cascade required for the development of the hypothalamic-pituitary-adrenal-gonadal axis. May also have a role in the development of the embryo and in the maintenance of embryonic stem cell pluripotency. In Sus scrofa (Pig), this protein is Nuclear receptor subfamily 0 group B member 1 (NR0B1).